The chain runs to 144 residues: Large ribosomal subunit protein uL15 (144 aa).

The segment at 1–51 (MRLNTIKPGAGSKSAGKRVGRGIGSGLGKTCGRGHKGQKSRAGGFHKVGFE) is disordered. Over residues 21 to 31 (RGIGSGLGKTC) the composition is skewed to gly residues.

Belongs to the universal ribosomal protein uL15 family. As to quaternary structure, part of the 50S ribosomal subunit.

Functionally, binds to the 23S rRNA. The protein is Large ribosomal subunit protein uL15 of Azoarcus sp. (strain BH72).